The sequence spans 688 residues: ATP-dependent RNA helicase ded1 (688 aa).

Composition is skewed to polar residues over residues 1-15 and 55-67; these read MADQ…LSID and GLNN…NNNY. Positions 1–170 are disordered; the sequence is MADQLSSGMG…TPDDPSKQHT (170 aa). Residues 88 to 102 show a composition bias toward gly residues; that stretch reads GFEGQQGAGWGGPRP. Residues 103 to 114 are compositionally biased toward low complexity; sequence QGGFNPNAYRGN. Residues 115 to 129 are compositionally biased toward gly residues; the sequence is AGAGAGAGAGGGGGS. The Q motif motif lies at 194-222; it reads LTFSNPPLDNHLISNIQLARYNVPTPVQK. The region spanning 225–416 is the Helicase ATP-binding domain; the sequence is IPIVMGGRDL…RDFLKDYIFL (192 aa). 238–245 serves as a coordination point for ATP; the sequence is AQTGSGKT. The short motif at 360–363 is the DEAD box element; it reads DEAD. In terms of domain architecture, Helicase C-terminal spans 427–587; sequence NITQKVEYVE…EVPAFLETIA (161 aa). Residues 590–615 form a disordered region; the sequence is SSFGGGRGGRGGGRGGGRGRTQTADY. Residues 592-608 show a composition bias toward gly residues; that stretch reads FGGGRGGRGGGRGGGRG.

Belongs to the DEAD box helicase family. DDX3/DED1 subfamily.

It localises to the cytoplasm. It catalyses the reaction ATP + H2O = ADP + phosphate + H(+). Its function is as follows. ATP-binding RNA helicase involved in translation initiation. Remodels RNA in response to ADP and ATP concentrations by facilitating disruption, but also formation of RNA duplexes. This Neurospora crassa (strain ATCC 24698 / 74-OR23-1A / CBS 708.71 / DSM 1257 / FGSC 987) protein is ATP-dependent RNA helicase ded1 (drh-9).